We begin with the raw amino-acid sequence, 486 residues long: Pentatricopeptide repeat-containing protein At3g06430, chloroplastic (486 aa).

The N-terminal 36 residues, 1 to 36, are a transit peptide targeting the chloroplast; the sequence is MASMSLSFSSSLCSSRIPEGKRRFRHRDVGIVRCVL. 10 PPR repeats span residues 123–157, 158–188, 194–228, 229–264, 265–299, 300–334, 335–369, 370–404, 405–439, and 440–470; these read KEGT…GLEP, TVEL…MKSF, DVFT…LITP, NTVT…ACKP, DVWT…GIEP, ETRT…EFPW, TTST…GMKA, DTKT…EIPE, NTAF…QCVC, and DSRT…RQKL.

This sequence belongs to the PPR family. P subfamily.

The protein localises to the plastid. Its subcellular location is the chloroplast. In Arabidopsis thaliana (Mouse-ear cress), this protein is Pentatricopeptide repeat-containing protein At3g06430, chloroplastic (EMB2750).